Here is a 166-residue protein sequence, read N- to C-terminus: Antibacterial peptide PMAP-36 (166 aa).

The N-terminal stretch at 1–29 is a signal peptide; the sequence is METQRASLCLGRWSLWLLLLGLVVPSASA. A propeptide spanning residues 30–129 is cleaved from the precursor; sequence QALSYREAVL…LDINCDEIQS (100 aa). 2 disulfide bridges follow: cysteine 85–cysteine 96 and cysteine 107–cysteine 124.

This sequence belongs to the cathelicidin family.

Its subcellular location is the secreted. Functionally, exerts antimicrobial activity against both Gram-positive and negative bacteria. Its activity appears to be mediated by its ability to damage bacterial membranes. The protein is Antibacterial peptide PMAP-36 (PMAP36) of Sus scrofa (Pig).